A 174-amino-acid polypeptide reads, in one-letter code: MNTMNSVLKYKELALYGGSFDPLHKAHLAIIEQTLELLPSAKLIVLPAYQNPFKKPCFLDAQTRFKELERALKGIDRVLLSDFEIKQERAVPTIESVLHFQKLYHPQTLYLVIGADCLRHLSSWTNAKELLKRVELVVFERIGYEEIQFKGHYHPLKGIDAPISSSAIRASLGV.

Belongs to the NadD family.

The enzyme catalyses nicotinate beta-D-ribonucleotide + ATP + H(+) = deamido-NAD(+) + diphosphate. Its pathway is cofactor biosynthesis; NAD(+) biosynthesis; deamido-NAD(+) from nicotinate D-ribonucleotide: step 1/1. Catalyzes the reversible adenylation of nicotinate mononucleotide (NaMN) to nicotinic acid adenine dinucleotide (NaAD). In Helicobacter pylori (strain ATCC 700392 / 26695) (Campylobacter pylori), this protein is Probable nicotinate-nucleotide adenylyltransferase (nadD).